The sequence spans 448 residues: MESLYSQFAQVLERYYQSGTKIVLAFSGGVDSRLLLELLSRYQKAYSVDNQSTDSHSFKCHAVYVHHGLSSNADEWAGKCLVWAEQAGITCSVERVSLDTNSGESIELLAREARYQALAKHIQSGDLLLTGQHADDQVETFLLALKRGSGPKGLSSMAESMPFAGGTLVRPLLAIKREQIEAVAKEQGLDWVEDESNQDTRYDRNFLRHRIMPELSERWPSIHQAVQRSASLCAQQEALLDELLLAVFERALQSDFSLSIEELATHSELARARLVRMWLAKLNANMPTQVQLNLIWNEVALAQQDANPKLQLKQGEVRRFQNRLYWVTETVDVTTWQSAIQTDTALLLPEQLGELTLSTNSEQATIAMPPHPELLRVTFNPEGLSAHPTTRSHSRKLKKLFQEYNVPSWLRRQIPILMYQDKVVAVGNLFVDQAFSGQDCELIWRKSL.

27 to 32 is an ATP binding site; that stretch reads SGGVDS.

Belongs to the tRNA(Ile)-lysidine synthase family.

It localises to the cytoplasm. The catalysed reaction is cytidine(34) in tRNA(Ile2) + L-lysine + ATP = lysidine(34) in tRNA(Ile2) + AMP + diphosphate + H(+). Its function is as follows. Ligates lysine onto the cytidine present at position 34 of the AUA codon-specific tRNA(Ile) that contains the anticodon CAU, in an ATP-dependent manner. Cytidine is converted to lysidine, thus changing the amino acid specificity of the tRNA from methionine to isoleucine. The polypeptide is tRNA(Ile)-lysidine synthase (Vibrio campbellii (strain ATCC BAA-1116)).